We begin with the raw amino-acid sequence, 191 residues long: GDP-mannose pyrophosphatase (191 aa).

Residues Tyr-17, 38–40 (KRE), Arg-67, and 85–87 (AGL) contribute to the GDP-alpha-D-mannose site. Residues 43–180 (DRGNGATILL…EIRDGKTVLL (138 aa)) enclose the Nudix hydrolase domain. Residues Ala-85, Glu-100, and Glu-104 each coordinate Mg(2+). The Nudix box signature appears at 86 to 106 (GLLDNDEPEVCIRKEAIEETG). GDP-alpha-D-mannose is bound by residues Glu-104, Glu-127, 150–151 (DE), and Lys-176. Glu-151 is a Mg(2+) binding site.

It belongs to the Nudix hydrolase family. NudK subfamily. As to quaternary structure, homodimer. Requires Mg(2+) as cofactor.

The catalysed reaction is GDP-alpha-D-mannose + H2O = alpha-D-mannose 1-phosphate + GMP + 2 H(+). Nucleoside diphosphate sugar hydrolase that hydrolyzes GDP-mannose as its preferred substrate, yielding GMP and mannose-1-phosphate. The polypeptide is GDP-mannose pyrophosphatase (nudK) (Escherichia coli (strain K12 / DH10B)).